Consider the following 147-residue polypeptide: Large ribosomal subunit protein uL15 (147 aa).

Residues 1–59 (MKLYELKPAPGSKKNRKRVGRGESSGHGKTSTRGHKGQWARSGGGVRPGFEGGQMPLTR) are disordered. Residues 42-52 (SGGGVRPGFEG) show a composition bias toward gly residues.

This sequence belongs to the universal ribosomal protein uL15 family. Part of the 50S ribosomal subunit.

In terms of biological role, binds to the 23S rRNA. The sequence is that of Large ribosomal subunit protein uL15 from Caldicellulosiruptor bescii (strain ATCC BAA-1888 / DSM 6725 / KCTC 15123 / Z-1320) (Anaerocellum thermophilum).